We begin with the raw amino-acid sequence, 559 residues long: MWTNFFKLRLFCCLLAVLMVVVLVVNVTQVEYLDHETVSATFIDSSGQFVSSQVTGISRNPYCGYDQQTLSSQERMEEDSLLAALHQQVPDVGPVPFVKSTDPSSSYFVILNSAAFFKVGSQLEVLVHVQDFQRKPKKYGGDYLQARIHSPKLQAGAVGRVVDYQNGFYKVFFTLLWPGKVKVSVSLVHPSEGIRVLQRLQEDKPDRVYFKSLFRSGRISETTECNVCLPGNLPLCNFTDLYTGEPWFCFKPKKLPCSSRITHFKGGYLKGLLTAAESAFFQSGVNIKMPINSSGPDWVTVIPRRIKETNNLELSQGSGTFPSGYYYKDQWRPRKFKMRQFNDPDNITECLQRKVVHLFGDSTIRQWFEYLTTFVPDLVEFNLGSPKNVGPFLAVDQKHNILLKYRCHGPPIRFTTVFSNELHYVANELNGIVGGKNTVVAIAVWSRFSTFPLEVYIRRLRNIRRAVVRLLDRSPKTVVVIRTANAQELGPEVSLFNSDWYNFQLDTILRRMFSGVGVYLVDAWEMTLAHYLPHKLHPDEVIVKNQLDMFLSFVCPLET.

An N-terminal signal peptide occupies residues Met-1–Val-30. 3 N-linked (GlcNAc...) asparagine glycosylation sites follow: Asn-26, Asn-237, and Asn-346.

It belongs to the NXPE family.

Its subcellular location is the secreted. The polypeptide is NXPE family member 3 (NXPE3) (Pongo abelii (Sumatran orangutan)).